We begin with the raw amino-acid sequence, 351 residues long: Probable aldo-keto reductase 2 (351 aa).

Y67 serves as the catalytic Proton donor. A substrate-binding site is contributed by H134. An NADP(+)-binding site is contributed by S213–G223. The interval Y317–Q351 is disordered. Residues M332–Q351 show a composition bias toward polar residues.

The protein belongs to the aldo/keto reductase family.

This Oryza sativa subsp. japonica (Rice) protein is Probable aldo-keto reductase 2.